Reading from the N-terminus, the 231-residue chain is 7-cyano-7-deazaguanine synthase (231 aa).

Phenylalanine 8 to leucine 18 provides a ligand contact to ATP. Residues cysteine 188, cysteine 197, cysteine 200, and cysteine 203 each coordinate Zn(2+).

Belongs to the QueC family. It depends on Zn(2+) as a cofactor.

It catalyses the reaction 7-carboxy-7-deazaguanine + NH4(+) + ATP = 7-cyano-7-deazaguanine + ADP + phosphate + H2O + H(+). The protein operates within purine metabolism; 7-cyano-7-deazaguanine biosynthesis. Its function is as follows. Catalyzes the ATP-dependent conversion of 7-carboxy-7-deazaguanine (CDG) to 7-cyano-7-deazaguanine (preQ(0)). The polypeptide is 7-cyano-7-deazaguanine synthase (Escherichia coli (strain ATCC 8739 / DSM 1576 / NBRC 3972 / NCIMB 8545 / WDCM 00012 / Crooks)).